The primary structure comprises 209 residues: Outer-membrane lipoprotein carrier protein (209 aa).

Residues Met1–Ala21 form the signal peptide.

Belongs to the LolA family. As to quaternary structure, monomer.

It localises to the periplasm. Its function is as follows. Participates in the translocation of lipoproteins from the inner membrane to the outer membrane. Only forms a complex with a lipoprotein if the residue after the N-terminal Cys is not an aspartate (The Asp acts as a targeting signal to indicate that the lipoprotein should stay in the inner membrane). This is Outer-membrane lipoprotein carrier protein from Hahella chejuensis (strain KCTC 2396).